The chain runs to 149 residues: Large ribosomal subunit protein uL11 (149 aa).

The protein belongs to the universal ribosomal protein uL11 family. Part of the ribosomal stalk of the 50S ribosomal subunit. Interacts with L10 and the large rRNA to form the base of the stalk. L10 forms an elongated spine to which L12 dimers bind in a sequential fashion forming a multimeric L10(L12)X complex. Post-translationally, one or more lysine residues are methylated.

Forms part of the ribosomal stalk which helps the ribosome interact with GTP-bound translation factors. The polypeptide is Large ribosomal subunit protein uL11 (Methylobacterium radiotolerans (strain ATCC 27329 / DSM 1819 / JCM 2831 / NBRC 15690 / NCIMB 10815 / 0-1)).